Reading from the N-terminus, the 361-residue chain is Cyclin-D3-3 (361 aa).

This sequence belongs to the cyclin family. Cyclin D subfamily.

Functionally, promotes divisions in the guard cells (GCs) after the guard mother cells (GMC) symmetric division. The polypeptide is Cyclin-D3-3 (CYCD3-3) (Arabidopsis thaliana (Mouse-ear cress)).